The following is a 443-amino-acid chain: Xaa-Pro dipeptidase (443 aa).

Mn(2+) contacts are provided by Asp246, Asp257, His339, Glu384, and Glu423.

Belongs to the peptidase M24B family. Bacterial-type prolidase subfamily. Mn(2+) serves as cofactor.

The enzyme catalyses Xaa-L-Pro dipeptide + H2O = an L-alpha-amino acid + L-proline. Its function is as follows. Splits dipeptides with a prolyl residue in the C-terminal position. In Yersinia pseudotuberculosis serotype I (strain IP32953), this protein is Xaa-Pro dipeptidase.